The chain runs to 156 residues: Ribosomal RNA large subunit methyltransferase H (156 aa).

Residues leucine 73, glycine 104, and 123–128 (LSKLTL) contribute to the S-adenosyl-L-methionine site.

The protein belongs to the RNA methyltransferase RlmH family. In terms of assembly, homodimer.

The protein resides in the cytoplasm. It catalyses the reaction pseudouridine(1915) in 23S rRNA + S-adenosyl-L-methionine = N(3)-methylpseudouridine(1915) in 23S rRNA + S-adenosyl-L-homocysteine + H(+). In terms of biological role, specifically methylates the pseudouridine at position 1915 (m3Psi1915) in 23S rRNA. This chain is Ribosomal RNA large subunit methyltransferase H, found in Hydrogenovibrio crunogenus (strain DSM 25203 / XCL-2) (Thiomicrospira crunogena).